Here is a 334-residue protein sequence, read N- to C-terminus: N-acetyl-gamma-glutamyl-phosphate reductase (334 aa).

The active site involves C154.

It belongs to the NAGSA dehydrogenase family. Type 1 subfamily.

Its subcellular location is the cytoplasm. The catalysed reaction is N-acetyl-L-glutamate 5-semialdehyde + phosphate + NADP(+) = N-acetyl-L-glutamyl 5-phosphate + NADPH + H(+). Its pathway is amino-acid biosynthesis; L-arginine biosynthesis; N(2)-acetyl-L-ornithine from L-glutamate: step 3/4. In terms of biological role, catalyzes the NADPH-dependent reduction of N-acetyl-5-glutamyl phosphate to yield N-acetyl-L-glutamate 5-semialdehyde. The polypeptide is N-acetyl-gamma-glutamyl-phosphate reductase (Escherichia coli O157:H7).